An 844-amino-acid chain; its full sequence is Leucine--tRNA ligase (844 aa).

The short motif at 39-49 (PYPSGRIHMGH) is the 'HIGH' region element. Residues 621 to 625 (KMSKS) carry the 'KMSKS' region motif. K624 contacts ATP.

It belongs to the class-I aminoacyl-tRNA synthetase family.

The protein localises to the cytoplasm. The catalysed reaction is tRNA(Leu) + L-leucine + ATP = L-leucyl-tRNA(Leu) + AMP + diphosphate. This chain is Leucine--tRNA ligase, found in Paracoccus denitrificans (strain Pd 1222).